Consider the following 46-residue polypeptide: Daisho2 (46 aa).

An N-terminal signal peptide occupies residues 1 to 22 (MNCLKICGFFFALIAALATAEA).

As to expression, hemolymph (at protein level).

It localises to the secreted. In terms of biological role, peptide which plays a role in the humoral immune response to a subset of filamentous fungi, including F.oxysporum and F.verticillioides. In Drosophila melanogaster (Fruit fly), this protein is Daisho2.